The primary structure comprises 72 residues: Translation initiation factor IF-1 (72 aa).

An S1-like domain is found at 1–72 (MAKEDSIEME…SKGRIVYRAR (72 aa)).

It belongs to the IF-1 family. Component of the 30S ribosomal translation pre-initiation complex which assembles on the 30S ribosome in the order IF-2 and IF-3, IF-1 and N-formylmethionyl-tRNA(fMet); mRNA recruitment can occur at any time during PIC assembly.

The protein localises to the cytoplasm. One of the essential components for the initiation of protein synthesis. Stabilizes the binding of IF-2 and IF-3 on the 30S subunit to which N-formylmethionyl-tRNA(fMet) subsequently binds. Helps modulate mRNA selection, yielding the 30S pre-initiation complex (PIC). Upon addition of the 50S ribosomal subunit IF-1, IF-2 and IF-3 are released leaving the mature 70S translation initiation complex. This is Translation initiation factor IF-1 from Nitrosococcus oceani (strain ATCC 19707 / BCRC 17464 / JCM 30415 / NCIMB 11848 / C-107).